We begin with the raw amino-acid sequence, 420 residues long: MSNALIEELQWRGLIYQQTDESSIEELLNKEQISLYCGADPTADSLHIGHLLPFMTLRRFQEHGHRPIVLIGGGTGMIGDPSGKSEERILQTEDQVEANVEGISAQMHKLFEFGTDKGAILVNNKDWLSQISLISFLRDYGKHVGVNYMLGKDSIQSRLENGISYTEFTYTILQAIDFGHLNRELNCKLQVGGSDQWGNITSGIELMRRMYGQTEAYGLTIPLVTKSDGKKFGKSESGAVWLDADKTSPYEFYQFWINQSDDDVIKFLKYFTFLDKDEINRLEESKNQEPHLREAQKALAENVTEFIHGKEALDDAIRISKALFSGDLKSLSGKELKEGFKDVPQVELSTETSNIIDVLIETGIATSKRQAREDVNNGAIYINGERQQSVDYELSNEDKIDDEFTIIRRGKKKYFMVNYK.

An L-tyrosine-binding site is contributed by Tyr36. Positions 41–50 (PTADSLHIGH) match the 'HIGH' region motif. 2 residues coordinate L-tyrosine: Tyr170 and Gln174. Residues 231 to 235 (KFGKS) carry the 'KMSKS' region motif. Residue Lys234 coordinates ATP. The S4 RNA-binding domain maps to 353–420 (SNIIDVLIET…KKKYFMVNYK (68 aa)).

The protein belongs to the class-I aminoacyl-tRNA synthetase family. TyrS type 1 subfamily. In terms of assembly, homodimer.

It localises to the cytoplasm. The enzyme catalyses tRNA(Tyr) + L-tyrosine + ATP = L-tyrosyl-tRNA(Tyr) + AMP + diphosphate + H(+). In terms of biological role, catalyzes the attachment of tyrosine to tRNA(Tyr) in a two-step reaction: tyrosine is first activated by ATP to form Tyr-AMP and then transferred to the acceptor end of tRNA(Tyr). The chain is Tyrosine--tRNA ligase from Staphylococcus haemolyticus (strain JCSC1435).